A 949-amino-acid polypeptide reads, in one-letter code: Bifunctional uridylyltransferase/uridylyl-removing enzyme (949 aa).

Positions 1-377 (MARHETSFPE…RFRNRVRKIP (377 aa)) are uridylyltransferase. Positions 378–733 (GTLDFVDDGG…VRTHDFHAIT (356 aa)) are uridylyl-removing. Residues 494–610 (VDEHLLRAVD…VDFAERVQSL (117 aa)) enclose the HD domain. 2 consecutive ACT domains span residues 734–815 (EITV…DVIA) and 845–926 (VIEV…ERMP). A disordered region spans residues 925–949 (MPSGIIAPTPVPRASHGSKATKAET).

This sequence belongs to the GlnD family. Requires Mg(2+) as cofactor.

It catalyses the reaction [protein-PII]-L-tyrosine + UTP = [protein-PII]-uridylyl-L-tyrosine + diphosphate. The enzyme catalyses [protein-PII]-uridylyl-L-tyrosine + H2O = [protein-PII]-L-tyrosine + UMP + H(+). Its activity is regulated as follows. Uridylyltransferase (UTase) activity is inhibited by glutamine, while glutamine activates uridylyl-removing (UR) activity. Functionally, modifies, by uridylylation and deuridylylation, the PII regulatory proteins (GlnB and homologs), in response to the nitrogen status of the cell that GlnD senses through the glutamine level. Under low glutamine levels, catalyzes the conversion of the PII proteins and UTP to PII-UMP and PPi, while under higher glutamine levels, GlnD hydrolyzes PII-UMP to PII and UMP (deuridylylation). Thus, controls uridylylation state and activity of the PII proteins, and plays an important role in the regulation of nitrogen fixation and metabolism. This is Bifunctional uridylyltransferase/uridylyl-removing enzyme from Sinorhizobium medicae (strain WSM419) (Ensifer medicae).